The sequence spans 325 residues: Methionine import ATP-binding protein MetN 3 (325 aa).

The region spanning 2–239 is the ABC transporter domain; it reads IEVQQLCKVY…PQSALGRALL (238 aa). 36–43 is a binding site for ATP; the sequence is GRSGAGKS.

This sequence belongs to the ABC transporter superfamily. Methionine importer (TC 3.A.1.24) family. In terms of assembly, the complex is composed of two ATP-binding proteins (MetN), two transmembrane proteins (MetI) and a solute-binding protein (MetQ).

The protein localises to the cell inner membrane. It catalyses the reaction L-methionine(out) + ATP + H2O = L-methionine(in) + ADP + phosphate + H(+). It carries out the reaction D-methionine(out) + ATP + H2O = D-methionine(in) + ADP + phosphate + H(+). Part of the ABC transporter complex MetNIQ involved in methionine import. Responsible for energy coupling to the transport system. In Pseudomonas fluorescens (strain ATCC BAA-477 / NRRL B-23932 / Pf-5), this protein is Methionine import ATP-binding protein MetN 3.